We begin with the raw amino-acid sequence, 141 residues long: Small ribosomal subunit protein uS12 (141 aa).

Over residues 1 to 11 (MPTISQLVTTS) the composition is skewed to polar residues. Residues 1 to 22 (MPTISQLVTTSRQDKNYKSKSP) are disordered. 3-methylthioaspartic acid is present on aspartate 102.

This sequence belongs to the universal ribosomal protein uS12 family. In terms of assembly, part of the 30S ribosomal subunit. Contacts proteins S8 and S17. May interact with IF1 in the 30S initiation complex.

Its function is as follows. With S4 and S5 plays an important role in translational accuracy. Functionally, interacts with and stabilizes bases of the 16S rRNA that are involved in tRNA selection in the A site and with the mRNA backbone. Located at the interface of the 30S and 50S subunits, it traverses the body of the 30S subunit contacting proteins on the other side and probably holding the rRNA structure together. The combined cluster of proteins S8, S12 and S17 appears to hold together the shoulder and platform of the 30S subunit. The polypeptide is Small ribosomal subunit protein uS12 (Acholeplasma laidlawii (strain PG-8A)).